The sequence spans 186 residues: Peptidyl-tRNA hydrolase (186 aa).

Residue Tyr-14 participates in tRNA binding. Catalysis depends on His-19, which acts as the Proton acceptor. TRNA is bound by residues Phe-64, Asn-66, and Asn-112.

It belongs to the PTH family. Monomer.

It is found in the cytoplasm. The enzyme catalyses an N-acyl-L-alpha-aminoacyl-tRNA + H2O = an N-acyl-L-amino acid + a tRNA + H(+). Its function is as follows. Hydrolyzes ribosome-free peptidyl-tRNAs (with 1 or more amino acids incorporated), which drop off the ribosome during protein synthesis, or as a result of ribosome stalling. Catalyzes the release of premature peptidyl moieties from peptidyl-tRNA molecules trapped in stalled 50S ribosomal subunits, and thus maintains levels of free tRNAs and 50S ribosomes. The sequence is that of Peptidyl-tRNA hydrolase from Listeria monocytogenes serotype 4b (strain CLIP80459).